Reading from the N-terminus, the 155-residue chain is Ribosomal RNA large subunit methyltransferase H (155 aa).

S-adenosyl-L-methionine contacts are provided by residues Leu-72, Gly-103, and 122–127; that span reads LSPLTL.

It belongs to the RNA methyltransferase RlmH family. Homodimer.

Its subcellular location is the cytoplasm. The catalysed reaction is pseudouridine(1915) in 23S rRNA + S-adenosyl-L-methionine = N(3)-methylpseudouridine(1915) in 23S rRNA + S-adenosyl-L-homocysteine + H(+). Functionally, specifically methylates the pseudouridine at position 1915 (m3Psi1915) in 23S rRNA. The protein is Ribosomal RNA large subunit methyltransferase H of Aeromonas hydrophila subsp. hydrophila (strain ATCC 7966 / DSM 30187 / BCRC 13018 / CCUG 14551 / JCM 1027 / KCTC 2358 / NCIMB 9240 / NCTC 8049).